Consider the following 351-residue polypeptide: Autoinducer 2 import system permease protein LsrC (351 aa).

9 helical membrane passes run 14-34 (LLAI…YFSL), 39-59 (MIFS…LVML), 70-90 (ITGL…GLVA), 93-113 (LFAL…VTWL), 115-135 (IPAI…MLLL), 155-175 (ILFS…AMAW), 213-233 (MNGV…GFIP), 252-272 (GISL…AFLL), and 284-304 (LPAW…LVFD).

It belongs to the binding-protein-dependent transport system permease family. AraH/RbsC subfamily. As to quaternary structure, the complex is composed of two ATP-binding proteins (LsrA), two transmembrane proteins (LsrC and LsrD) and a solute-binding protein (LsrB).

It localises to the cell inner membrane. Functionally, part of the ABC transporter complex LsrABCD involved in autoinducer 2 (AI-2) import. Probably responsible for the translocation of the substrate across the membrane. The sequence is that of Autoinducer 2 import system permease protein LsrC (lsrC) from Yersinia pseudotuberculosis serotype O:3 (strain YPIII).